Consider the following 1199-residue polypeptide: Ecdysone-induced protein 75B, isoforms C/D (1199 aa).

A disordered region spans residues 130-182; it reads TTDGPTAVLQQQQPQQQMPQHFESLPHHHPQQEHQPQQQQQQHHLQHHPHPHV. Low complexity-rich tracts occupy residues 139–149 and 162–172; these read QQQQPQQQMPQ and EHQPQQQQQQH. Positions 242 to 318 form a DNA-binding region, nuclear receptor; it reads TVLCRVCGDK…VGMSRDAVRF (77 aa). 2 consecutive NR C4-type zinc fingers follow at residues 245–265 and 282–306; these read CRVC…CEGC and CTKN…LKKC. In terms of domain architecture, NR LBD spans 352 to 600; that stretch reads DQPRLLAAVL…QQMWSMEDGN (249 aa). Disordered regions lie at residues 624–665, 771–808, 831–851, 895–961, 991–1104, and 1155–1188; these read KSPL…SALA, LDSP…SVDD, VSVS…KRQI, AEAD…SSHS, ENST…SNSA, and VTVT…NPGL. Low complexity-rich tracts occupy residues 641–653, 792–804, 831–845, 897–942, and 950–961; these read GSPS…GVSL, SSGG…SPRS, VSVS…STSS, ADAS…AQSQ, and SSPKASMASSHS. 2 stretches are compositionally biased toward polar residues: residues 993 to 1006 and 1018 to 1040; these read STAA…VGNR and AVQN…QRQQ. 3 stretches are compositionally biased toward low complexity: residues 1041–1077, 1086–1104, and 1159–1187; these read SVSP…SASS, STSN…SNSA, and ASNG…PNPG.

It belongs to the nuclear hormone receptor family. NR1 subfamily.

Its subcellular location is the nucleus. Its function is as follows. Implicated in the regulation of ecdysone-triggered gene hierarchies. Probably plays a key role in mediating the regulation of the larval molt by 20-OH-ecdysone. This chain is Ecdysone-induced protein 75B, isoforms C/D (Eip75B), found in Drosophila melanogaster (Fruit fly).